Consider the following 275-residue polypeptide: Arylalkylamine N-acetyltransferase 1 (275 aa).

Acetyl-CoA-binding positions include 181–183 (LSV) and 189–193 (GLGIA). The region spanning 181-254 (LSVDTNYRGL…GEVVFKPAAP (74 aa)) is the N-acetyltransferase domain.

This sequence belongs to the acetyltransferase family. AANAT subfamily. In terms of tissue distribution, in the adult, expressed in the midgut portion of the thoracic segments and the frontal half of the abdomen (at protein level). Expressed in the epithelial cell layer facing the lumen of the gut (at protein level). In the brain, expressed in a sub-populations of neurons and astrocytes, and in a set of distinct stripes in the optic lobes (at protein level). Expressed mainly in serotonergic neurons but also in subsets of glutamatergic, GABAergic and cholinergic neurons (at protein level).

The protein resides in the cytoplasm. The protein localises to the nucleus. It carries out the reaction a 2-arylethylamine + acetyl-CoA = an N-acetyl-2-arylethylamine + CoA + H(+). The enzyme catalyses serotonin + acetyl-CoA = N-acetylserotonin + CoA + H(+). The catalysed reaction is dopamine + acetyl-CoA = N-acetyldopamine + CoA + H(+). It catalyses the reaction tyramine + acetyl-CoA = N-acetyltyramine + CoA + H(+). It carries out the reaction octopamine + acetyl-CoA = N-acetyloctopamine + CoA + H(+). The enzyme catalyses 5-methoxytryptamine + acetyl-CoA = melatonin + CoA + H(+). The catalysed reaction is 2-phenylethylamine + acetyl-CoA = N-(2-phenylethyl)acetamide + CoA + H(+). It catalyses the reaction noradrenaline + acetyl-CoA = N-acetylnoradrenaline + CoA + H(+). It carries out the reaction tyramine + butanoyl-CoA = N-butanoyltyramine + CoA + H(+). The enzyme catalyses tyramine + hexanoyl-CoA = N-hexanoyltyramine + CoA + H(+). The catalysed reaction is tryptamine + acetyl-CoA = N-acetyltryptamine + CoA + H(+). It catalyses the reaction dopamine + hexadecanoyl-CoA = N-hexadecanoyl-dopamine + CoA + H(+). It carries out the reaction dopamine + (9Z)-octadecenoyl-CoA = N-(9Z-octadecanoyl)-dopamine + CoA + H(+). The enzyme catalyses serotonin + hexadecanoyl-CoA = N-hexadecanoyl-serotonin + CoA + H(+). The catalysed reaction is serotonin + (9Z)-octadecenoyl-CoA = N-(9Z-octadecenoyl)-serotonin + CoA + H(+). It catalyses the reaction serotonin + octadecanoyl-CoA = N-octadecanoyl-serotonin + CoA + H(+). It carries out the reaction serotonin + (5Z,8Z,11Z,14Z)-eicosatetraenoyl-CoA = N-[(5Z,8Z,11Z,14Z)-eicosatetraenoyl]-serotonin + CoA + H(+). It participates in aromatic compound metabolism; melatonin biosynthesis; melatonin from serotonin: step 1/2. Inhibited by long-chain acyl-CoA thioesters, oleoyl-CoA (an analog of acetyl-CoA) and tyrosol (an analog of tyramine). Its function is as follows. Catalyzes N-acetylation of tryptamine, tyramine, dopamine, serotonin and octopamine. In astrocytes, regulates sleep homeostasis by limiting the accumulation of serotonin and dopamine in the brain upon sleep deprivation. Is not essential for sclerotization. This chain is Arylalkylamine N-acetyltransferase 1, found in Drosophila melanogaster (Fruit fly).